Reading from the N-terminus, the 175-residue chain is Inner membrane protein p54 (175 aa).

The chain crosses the membrane as a helical span at residues 32–52; that stretch reads CTILVAIVVLIIIIIVLIYLF. Residues 79 to 89 are compositionally biased toward polar residues; that stretch reads QWAGATPQPGT. Residues 79–121 form a disordered region; that stretch reads QWAGATPQPGTSKPAGATTGNVGKPITDRPATDRPVTNNPVTD. The tract at residues 141–153 is interaction with host DYNLL1; the sequence is YTTATTQNTASQT.

It belongs to the asfivirus envelope protein p54 family. As to quaternary structure, interacts with the host light chain cytoplasmic dynein DYNLL1; this interaction is critical for intracellular microtubule-dependent virus transport toward viral factories.

Its subcellular location is the virion membrane. It localises to the host cytoplasm. It is found in the host cytoskeleton. The protein localises to the host endoplasmic reticulum membrane. Functionally, inner envelope protein involved, through its interaction with host dynein, in the intracellular microtubule-dependent transport of viral capsid toward viral factories. Seems to induce caspase-3 activation and apoptosis. Plays a role in virion morphogenesis by recruiting and transforming the host ER membranes into the precursors of the viral envelope. Involved in virus attachment to the host cell. This is Inner membrane protein p54 from African swine fever virus (isolate Pig/Kenya/KEN-50/1950) (ASFV).